A 196-amino-acid chain; its full sequence is Pyridoxal 5'-phosphate synthase subunit PdxT (196 aa).

L-glutamine is bound at residue 47 to 49 (GES). Cysteine 79 serves as the catalytic Nucleophile. L-glutamine is bound by residues arginine 106 and 134–135 (IR). Catalysis depends on charge relay system residues histidine 170 and glutamate 172.

The protein belongs to the glutaminase PdxT/SNO family. In terms of assembly, in the presence of PdxS, forms a dodecamer of heterodimers. Only shows activity in the heterodimer.

It carries out the reaction aldehydo-D-ribose 5-phosphate + D-glyceraldehyde 3-phosphate + L-glutamine = pyridoxal 5'-phosphate + L-glutamate + phosphate + 3 H2O + H(+). The enzyme catalyses L-glutamine + H2O = L-glutamate + NH4(+). It functions in the pathway cofactor biosynthesis; pyridoxal 5'-phosphate biosynthesis. Functionally, catalyzes the hydrolysis of glutamine to glutamate and ammonia as part of the biosynthesis of pyridoxal 5'-phosphate. The resulting ammonia molecule is channeled to the active site of PdxS. The polypeptide is Pyridoxal 5'-phosphate synthase subunit PdxT (Bacillus thuringiensis subsp. konkukian (strain 97-27)).